The chain runs to 1028 residues: MENALTARDRVGVQDFVLLENYTSEAAFIENLRKRFKENLIYTYIGSVLVSVNPYKDLEIYSKQHMERYRGVSFYEVSPHIYAIADNSYRSLRTERKDQCILISGESGSGKTEASKKILQYYAVTCPASDQVETVKDRLLQSNPVLEAFGNAKTLRNDNSSRFGKYMDVQFDYKGAPVGGHILNYLLEKSRVVHQNHGERNFHIFYQLLEGGEEELLRRLGLDKNAQNYQYLVKGQCARVSSINDKSDWKTVRRALSIINFNEEDIEELLSIVASVLHLGNVQFASDDHSHAQVTTENQIKYIARLLAVDATAFRESLIHKKIIAKGEELNSPLNLEQAAYARDAFAKAIYGRTFSWLVRNINKSLAYKGSDIQSIGNASVIGLLDIYGFEVFQHNSFEQFCINYCNEKLQQLFIELTLKSEQEEYESEGIAWEPVQYFNNKIICDLVEEKYKGIISILDEECLRPGEATDMTFLEKLEDTVKNHPHFVTHKFGDQKLRKSLGRDEFRPLHYAGEVNYSVVGFLDKNNDLLFRNLKEVMCDSGNPIVHQCFDRTELTDKKRPETVATQFKNSLSKLMEILMSKEPSYVRCIKPNDAKQAARFDEVLIRHQVKYLGLIENVRVRRAGFAYRRKYEIFLHRYKSLCPETWPNWDGRAQDGVAVLVKSLGYKPEEYKMGRTKIFIRFPKTLFATEDALEERKQGIATFLQARWKGYVQRRNFLHMKHSAINIQSWWRGNIGRKKAAKKRWAVDVVRRFVKGFIYRNNPRCPENEYFLDYIRYSFLMNLRRNMPKSVLDKSWPVPPPSLQEASELLREMCMNNMVWAYCKRISPEMKQQLEQKVVASEIFKDKKDNYPQSVPRLFINTRLGNEEINTKILQNMENQALTYAVPVVKYDRKGYKPRRRQLLLTHNTAYIVEEAKLKQRIDYANLTGISVSSLSDNLFVLHVKCEDNKQKGDVVLQSDHVIETLTKIAITAEKIHNINIIQGSIKFIVGNGKEGIIDFTPGSELLVAKAKNGHLSVVAPRLNSR.

At Met1 the chain carries N-acetylmethionine. Residues 12–696 (GVQDFVLLEN…TLFATEDALE (685 aa)) form the Myosin motor domain. 105 to 112 (GESGSGKT) is an ATP binding site. N6-methyllysine is present on Lys348. The interval 573–595 (LSKLMEILMSKEPSYVRCIKPND) is actin-binding. 2 consecutive IQ domains span residues 699 to 728 (KQGI…SAIN) and 722 to 751 (MKHS…AVDV). Residues 850–1024 (KDNYPQSVPR…NGHLSVVAPR (175 aa)) enclose the TH1 domain.

It belongs to the TRAFAC class myosin-kinesin ATPase superfamily. Myosin family. As to quaternary structure, interacts (via its IQ motifs) with calmodulin.

It is found in the cytoplasm. The protein localises to the cell membrane. Its subcellular location is the cell projection. It localises to the stereocilium membrane. Functionally, myosins are actin-based motor molecules with ATPase activity. Unconventional myosins serve in intracellular movements. Their highly divergent tails are presumed to bind to membranous compartments, which would be moved relative to actin filaments. Involved in egg activation by coupling dynamic actin to membrane. The chain is Unconventional myosin-Ic-A (myo1c-a) from Xenopus laevis (African clawed frog).